We begin with the raw amino-acid sequence, 225 residues long: MVKPLALDETTLEAPEWRISDLPVPYEEAVKTMEARAAAIAEGTAPELVWLLEHPALYTAGTSADETDLLDPKRFPVFSTGRGGQYTYHGPGQRVAYVMLDLKRRKPDVRAYVQDLERWLIATLAEFNVTGETRPDRVGVWVKRPEKGLTAEDKIAAIGVRIRKWVTFHGVSLNVEPDLDHFSGIVPCGISQFGVTSLADLGHTATMADVDLALKKTFRDVFGRG.

The BPL/LPL catalytic domain maps to 43–225 (GTAPELVWLL…KTFRDVFGRG (183 aa)). Residues 82–89 (RGGQYTYH), 157–159 (AIG), and 170–172 (GVS) contribute to the substrate site. Cys188 serves as the catalytic Acyl-thioester intermediate.

It belongs to the LipB family.

It localises to the cytoplasm. The catalysed reaction is octanoyl-[ACP] + L-lysyl-[protein] = N(6)-octanoyl-L-lysyl-[protein] + holo-[ACP] + H(+). The protein operates within protein modification; protein lipoylation via endogenous pathway; protein N(6)-(lipoyl)lysine from octanoyl-[acyl-carrier-protein]: step 1/2. In terms of biological role, catalyzes the transfer of endogenously produced octanoic acid from octanoyl-acyl-carrier-protein onto the lipoyl domains of lipoate-dependent enzymes. Lipoyl-ACP can also act as a substrate although octanoyl-ACP is likely to be the physiological substrate. The chain is Octanoyltransferase from Parvibaculum lavamentivorans (strain DS-1 / DSM 13023 / NCIMB 13966).